Consider the following 305-residue polypeptide: Ribonuclease BN (305 aa).

7 residues coordinate Zn(2+): histidine 64, histidine 66, aspartate 68, histidine 69, histidine 141, aspartate 212, and histidine 270. Residue aspartate 68 is the Proton acceptor of the active site.

It belongs to the RNase Z family. RNase BN subfamily. In terms of assembly, homodimer. It depends on Zn(2+) as a cofactor.

In terms of biological role, zinc phosphodiesterase, which has both exoribonuclease and endoribonuclease activities. In Citrobacter koseri (strain ATCC BAA-895 / CDC 4225-83 / SGSC4696), this protein is Ribonuclease BN.